The sequence spans 383 residues: MHC class I polypeptide-related sequence A (383 aa).

The first 23 residues, 1 to 23, serve as a signal peptide directing secretion; the sequence is MGLGPVFLLLAGIFPFAPPGAAA. Residues 24–307 are Extracellular-facing; it reads EPHSLRYNLT…GKVLVLQSHW (284 aa). The N-linked (GlcNAc...) asparagine glycan is linked to Asn-31. Cys-59 and Cys-64 are oxidised to a cystine. N-linked (GlcNAc...) asparagine glycosylation occurs at Asn-79. Cys-119 and Cys-187 form a disulfide bridge. The Ig-like C1-type domain occupies 207-296; sequence PMVNVTRSEA…SGNHSTHPVP (90 aa). N-linked (GlcNAc...) asparagine glycans are attached at residues Asn-210, Asn-220, and Asn-261. Cysteines 225 and 282 form a disulfide. The helical transmembrane segment at 308–328 threads the bilayer; it reads QTFHVSAVAAAAIFVIIIFYV. The Cytoplasmic segment spans residues 329–383; sequence RCCKKKTSAAEGPELVSLQVLDQHPVGTSDHRDATQLGFQPLMSDLGSTGSTEGA. 2 S-palmitoyl cysteine lipidation sites follow: Cys-330 and Cys-331.

This sequence belongs to the MHC class I family. MIC subfamily. In terms of assembly, unlike classical MHC class I molecules, does not form a heterodimer with beta-2-microglobulin. Binds as a monomer to a KLRK1/NKG2D homodimer. KLRK1 forms a complex with HCST/DAP10 in which KLRK1 binds MICA while HCST acts as an adapter molecule which enables signal transduction. Interacts with PDIA6 on the surface of tumor cells, leading to disulfide bond reduction which is required for release of MICA from tumor cells. (Microbial infection) Interacts with human cytomegalovirus/HHV-5 protein UL142. N-glycosylated. Glycosylation is not essential for interaction with KLRK1/NKG2D but enhances complex formation. In terms of processing, proteolytically cleaved and released from the cell surface of tumor cells which impairs KLRK1/NKG2D expression and T-cell activation. Post-translationally, palmitoylated on cysteine residues in the cytoplasmic tail leading to its association with membrane microdomains enriched in cholesterol. N-glycosylation is necessary for cell surface expression. In terms of processing, (Microbial infection) Ubiquitinated by human herpesvirus 8 protein K5, leading to degradation. In terms of tissue distribution, widely expressed with the exception of the central nervous system where it is absent. Expressed predominantly in gastric epithelium and also in monocytes, keratinocytes, endothelial cells, fibroblasts and in the outer layer of Hassal's corpuscles within the medulla of normal thymus. In skin, expressed mainly in the keratin layers, basal cells, ducts and follicles. Also expressed in many, but not all, epithelial tumors of lung, breast, kidney, ovary, prostate and colon. In thyomas, overexpressed in cortical and medullar epithelial cells. Tumors expressing MICA display increased levels of gamma delta T-cells.

Its subcellular location is the cell membrane. The protein localises to the cytoplasm. Widely expressed membrane-bound protein which acts as a ligand to stimulate an activating receptor KLRK1/NKG2D, expressed on the surface of essentially all human natural killer (NK), gammadelta T and CD8 alphabeta T-cells. Up-regulated in stressed conditions, such as viral and bacterial infections or DNA damage response, serves as signal of cellular stress, and engagement of KLRK1/NKG2D by MICA triggers NK-cells resulting in a range of immune effector functions, such as cytotoxicity and cytokine production. The protein is MHC class I polypeptide-related sequence A of Homo sapiens (Human).